We begin with the raw amino-acid sequence, 291 residues long: N-acetylmannosamine kinase (291 aa).

ATP-binding positions include 5–12 and 132–139; these read AIDIGGTK and GVGGGVVC. His-156, Cys-166, Cys-168, and Cys-173 together coordinate Zn(2+).

It belongs to the ROK (NagC/XylR) family. NanK subfamily. As to quaternary structure, homodimer.

The catalysed reaction is an N-acyl-D-mannosamine + ATP = an N-acyl-D-mannosamine 6-phosphate + ADP + H(+). It functions in the pathway amino-sugar metabolism; N-acetylneuraminate degradation; D-fructose 6-phosphate from N-acetylneuraminate: step 2/5. Its function is as follows. Catalyzes the phosphorylation of N-acetylmannosamine (ManNAc) to ManNAc-6-P. The sequence is that of N-acetylmannosamine kinase from Salmonella dublin (strain CT_02021853).